The chain runs to 151 residues: UPF0178 protein Caul_3070 (151 aa).

It belongs to the UPF0178 family.

The sequence is that of UPF0178 protein Caul_3070 from Caulobacter sp. (strain K31).